A 196-amino-acid chain; its full sequence is Probable nicotinate-nucleotide adenylyltransferase (196 aa).

This sequence belongs to the NadD family.

It catalyses the reaction nicotinate beta-D-ribonucleotide + ATP + H(+) = deamido-NAD(+) + diphosphate. It participates in cofactor biosynthesis; NAD(+) biosynthesis; deamido-NAD(+) from nicotinate D-ribonucleotide: step 1/1. In terms of biological role, catalyzes the reversible adenylation of nicotinate mononucleotide (NaMN) to nicotinic acid adenine dinucleotide (NaAD). In Thermotoga petrophila (strain ATCC BAA-488 / DSM 13995 / JCM 10881 / RKU-1), this protein is Probable nicotinate-nucleotide adenylyltransferase.